The following is a 443-amino-acid chain: tRNA modification GTPase MnmE (443 aa).

Residues R23, E82, and K121 each contribute to the (6S)-5-formyl-5,6,7,8-tetrahydrofolate site. In terms of domain architecture, TrmE-type G spans 215-364 (GTSIVLAGHP…LKQFIQKWMQ (150 aa)). N225 contributes to the K(+) binding site. GTP contacts are provided by residues 225–230 (NVGKSS), 244–250 (TDIPGTT), and 269–272 (DSAG). S229 lines the Mg(2+) pocket. The K(+) site is built by T244, I246, and T249. T250 contacts Mg(2+). K443 contributes to the (6S)-5-formyl-5,6,7,8-tetrahydrofolate binding site.

It belongs to the TRAFAC class TrmE-Era-EngA-EngB-Septin-like GTPase superfamily. TrmE GTPase family. Homodimer. Heterotetramer of two MnmE and two MnmG subunits. K(+) serves as cofactor.

The protein localises to the cytoplasm. Exhibits a very high intrinsic GTPase hydrolysis rate. Involved in the addition of a carboxymethylaminomethyl (cmnm) group at the wobble position (U34) of certain tRNAs, forming tRNA-cmnm(5)s(2)U34. This chain is tRNA modification GTPase MnmE, found in Chlamydia caviae (strain ATCC VR-813 / DSM 19441 / 03DC25 / GPIC) (Chlamydophila caviae).